A 279-amino-acid chain; its full sequence is Aquaporin A (279 aa).

The Cytoplasmic segment spans residues 1 to 40 (MVKVVPLRFITYDPLKDPSKMIYRRPISKPVKAFKGFFSE). A helical transmembrane segment spans residues 41–61 (FLGTLYLVYFCGGSVCAAFAV). Topologically, residues 62 to 69 (AGDSAARA) are extracellular. Residues 70-90 (LLGGLIQGMALAALIWAVSGV) traverse the membrane as a helical segment. Residues 91–114 (SGCNLNPAVTLANLLSGRVGLIDS) are Cytoplasmic-facing. Residues 96-98 (NPA) carry the NPA 1 motif. A helical transmembrane segment spans residues 115-135 (LYYVAAQILGCIAGAGILYGC). Residues 136–158 (LPNMYRIDLGVPHLAPGMNTGQA) are Extracellular-facing. Residues 159–179 (FLMEMMLTSILCLCVLGTSVF) form a helical membrane-spanning segment. Over 180-188 (NVWDRRLNR) the chain is Cytoplasmic. A helical transmembrane segment spans residues 189–209 (IAPFAIGLALFIGVAIGFNFS). At 210–227 (GGALNPVRVLGPSIISGV) the chain is on the extracellular side. Positions 214–216 (NPV) match the NPA 2 motif. Residues 228–248 (WSHHWVYWLGPIVGAILAAFI) form a helical membrane-spanning segment. Residues 249–279 (YRCLLQERFDVIERPGYIAPLIDPSTAVSSY) lie on the Cytoplasmic side of the membrane.

This sequence belongs to the MIP/aquaporin (TC 1.A.8) family.

It is found in the cell membrane. May form a water-specific channel. Required for prolonged spore survival on fruiting bodies. This is Aquaporin A (aqpA) from Dictyostelium discoideum (Social amoeba).